We begin with the raw amino-acid sequence, 234 residues long: Glutathione S-transferase U11 (234 aa).

The GST N-terminal domain maps to 11–90; that stretch reads EYVKLLGAWP…YVDETWLSGP (80 aa). Glutathione contacts are provided by residues 21–22, 47–48, 61–62, and 74–75; these read SP, LS, QI, and ES. Residues 96–228 form the GST C-terminal domain; the sequence is DPFDRAVARF…KLVQFARLKF (133 aa).

Belongs to the GST superfamily. Tau family.

It localises to the cytoplasm. The protein resides in the cytosol. It catalyses the reaction RX + glutathione = an S-substituted glutathione + a halide anion + H(+). Functionally, may be involved in the conjugation of reduced glutathione to a wide number of exogenous and endogenous hydrophobic electrophiles and have a detoxification role against certain herbicides. This is Glutathione S-transferase U11 (GSTU11) from Arabidopsis thaliana (Mouse-ear cress).